A 387-amino-acid chain; its full sequence is ATP phosphoribosyltransferase regulatory subunit (387 aa).

Belongs to the class-II aminoacyl-tRNA synthetase family. HisZ subfamily. As to quaternary structure, heteromultimer composed of HisG and HisZ subunits.

It localises to the cytoplasm. It participates in amino-acid biosynthesis; L-histidine biosynthesis; L-histidine from 5-phospho-alpha-D-ribose 1-diphosphate: step 1/9. Required for the first step of histidine biosynthesis. May allow the feedback regulation of ATP phosphoribosyltransferase activity by histidine. The protein is ATP phosphoribosyltransferase regulatory subunit of Psychrobacter cryohalolentis (strain ATCC BAA-1226 / DSM 17306 / VKM B-2378 / K5).